A 52-amino-acid polypeptide reads, in one-letter code: Venom peptide 4a (52 aa).

The N-terminal stretch at 1 to 23 (MRSAILLVIVAIVAILGFLGVNA) is a signal peptide. 3 AXPX repeats span residues 23 to 26 (AEPL), 31 to 34 (AEPN), and 39 to 42 (AAPL). Residues 24 to 41 (EPLPSPLAEPNPHAKAAP) constitute a propeptide that is removed on maturation. Alanine 51 carries the alanine amide modification.

In terms of tissue distribution, expressed by the venom gland.

Its subcellular location is the secreted. The polypeptide is Venom peptide 4a (Eumenes pomiformis (Potter wasp)).